The chain runs to 414 residues: DNA primase small subunit PriS (414 aa).

Active-site residues include D98, D100, and D312.

This sequence belongs to the eukaryotic-type primase small subunit family. Heterodimer of a small subunit (PriS) and a large subunit (PriL). The cofactor is Mg(2+). Mn(2+) is required as a cofactor.

Its function is as follows. Catalytic subunit of DNA primase, an RNA polymerase that catalyzes the synthesis of short RNA molecules used as primers for DNA polymerase during DNA replication. The small subunit contains the primase catalytic core and has DNA synthesis activity on its own. Binding to the large subunit stabilizes and modulates the activity, increasing the rate of DNA synthesis while decreasing the length of the DNA fragments, and conferring RNA synthesis capability. The DNA polymerase activity may enable DNA primase to also catalyze primer extension after primer synthesis. May also play a role in DNA repair. The protein is DNA primase small subunit PriS of Methanosarcina mazei (strain ATCC BAA-159 / DSM 3647 / Goe1 / Go1 / JCM 11833 / OCM 88) (Methanosarcina frisia).